The chain runs to 937 residues: Calsyntenin-2 (937 aa).

The N-terminal stretch at M1–A22 is a signal peptide. The Extracellular segment spans residues G23 to P818. Cadherin domains lie at I32–F148 and R149–W249. N86 is a glycosylation site (N-linked (GlcNAc...) asparagine). Residues N330, N365, and N716 are each glycosylated (N-linked (GlcNAc...) asparagine). The chain crosses the membrane as a helical span at residues A819–I839. Over Y840–Y937 the chain is Cytoplasmic. The segment at H846–Y937 is disordered. A compositionally biased stretch (polar residues) spans D865–G874. Composition is skewed to acidic residues over residues V881–A900 and E907–T917.

It belongs to the calsyntenin family. As to quaternary structure, homooligomer and heterooligomer; mediates both homophilic and heterophilc interactions with clstn1 and clstn3 paralogs via cadherin domains. By 48 hours post-fertilization (hpf), widely expressed in the brain, with strong expression in the telencephalon and the midbrain.

The protein localises to the postsynaptic cell membrane. It localises to the endoplasmic reticulum membrane. The protein resides in the golgi apparatus membrane. It is found in the cell projection. Its subcellular location is the dendrite. In terms of biological role, postsynaptic adhesion molecule. Promotes synapse development by acting as a cell adhesion molecule at the postsynaptic membrane, which associates with presynaptic neurexins. The sequence is that of Calsyntenin-2 (clstn2a) from Danio rerio (Zebrafish).